The primary structure comprises 145 residues: Large ribosomal subunit protein uL24 (145 aa).

The interval 108–145 (EPIQEEQQKTEETKQEIAPEEVEAKEAQDKQEVKENDQ) is disordered. The segment covering 113 to 145 (EQQKTEETKQEIAPEEVEAKEAQDKQEVKENDQ) has biased composition (basic and acidic residues).

The protein belongs to the universal ribosomal protein uL24 family. Part of the 50S ribosomal subunit.

Its function is as follows. One of two assembly initiator proteins, it binds directly to the 5'-end of the 23S rRNA, where it nucleates assembly of the 50S subunit. Functionally, located at the polypeptide exit tunnel on the outside of the subunit. The chain is Large ribosomal subunit protein uL24 (rpl24) from Thermoplasma volcanium (strain ATCC 51530 / DSM 4299 / JCM 9571 / NBRC 15438 / GSS1).